Consider the following 131-residue polypeptide: C-type natriuretic peptide 1 (131 aa).

The first 22 residues, 1–22 (MLYPALLCAALLLIAPLGHTEG), serve as a signal peptide directing secretion. Positions 23 to 109 (RTLHPSPDAI…KRAVMDRSRR (87 aa)) are excised as a propeptide. Cysteine 115 and cysteine 131 are disulfide-bonded.

It belongs to the natriuretic peptide family. As to expression, expressed in brain and to a low extent in atrium.

It is found in the secreted. Functionally, exhibits natriuretic and vasodepressant activity. Has a cGMP-stimulating activity. This is C-type natriuretic peptide 1 from Oncorhynchus mykiss (Rainbow trout).